The sequence spans 275 residues: uncharacterized protein (275 aa).

The 162-residue stretch at Asn1–Arg162 folds into the ABC transmembrane type-1 domain. The next 3 membrane-spanning stretches (helical) occupy residues Leu21–Met41, Ile106–Met126, and Phe137–Trp157.

The protein localises to the cell membrane. This is an uncharacterized protein from Staphylococcus epidermidis.